Consider the following 537-residue polypeptide: Copine-1 (537 aa).

C2 domains lie at M1–L114 and G123–H245. D21, D27, D80, D82, D92, D153, and D159 together coordinate Ca(2+). K171 carries the N6-acetyllysine modification. Residues D214, D216, and D222 each coordinate Ca(2+). Residues N285–V505 enclose the VWFA domain.

The protein belongs to the copine family. Homodimer; homodimerizes via its C2 domains. Interacts with p65/RELA (via N-terminus); this interaction induces proteolytic cleavage of p65/RELA subunit and inhibition of NF-kappa-B transcriptional activity. Interacts (via VWFA domain) with ACTB, CCDC22, MYCBP2, PPP5C, RDX and UBE2O. The cofactor is Ca(2+). In terms of tissue distribution, expressed in liver, spleen, muscle, testis, adrenal (at protein level).

The protein resides in the nucleus. It localises to the cytoplasm. The protein localises to the cell membrane. In terms of biological role, calcium-dependent phospholipid-binding protein that plays a role in calcium-mediated intracellular processes. Involved in the TNF-alpha receptor signaling pathway in a calcium-dependent manner. Exhibits calcium-dependent phospholipid binding properties. Plays a role in neuronal progenitor cell differentiation; induces neurite outgrowth via a AKT-dependent signaling cascade and calcium-independent manner. May recruit target proteins to the cell membrane in a calcium-dependent manner. May function in membrane trafficking. Involved in TNF-alpha-induced NF-kappa-B transcriptional repression by inducing endoprotease processing of the transcription factor NF-kappa-B p65/RELA subunit. Also induces endoprotease processing of NF-kappa-B p50/NFKB1, p52/NFKB2, RELB and REL. The sequence is that of Copine-1 from Bos taurus (Bovine).